The following is a 551-amino-acid chain: Peptidyl-prolyl cis-trans isomerase-like 4 (551 aa).

Residues 1–185 enclose the PPIase cyclophilin-type domain; the sequence is MSVLLETSLG…RDIRIRHVVV (185 aa). Residues 54–88 form a disordered region; it reads GDPSNTGKGGASIWSQLPSTSQDSSTSTYFTPESS. Over residues 66–88 the composition is skewed to polar residues; that stretch reads IWSQLPSTSQDSSTSTYFTPESS. Residues 262–340 enclose the RRM domain; the sequence is NILFVCKLNP…RRIWVDFSQS (79 aa). A disordered region spans residues 352 to 551; the sequence is RNAGSDAPRA…RQRSRDGSRR (200 aa). 2 stretches are compositionally biased toward basic and acidic residues: residues 384–397 and 408–454; these read KRGDDRRHDRRDQP and SRQD…SHRD. Residues 455-464 are compositionally biased toward basic residues; the sequence is HERHHLSRHV. Over residues 465-551 the composition is skewed to basic and acidic residues; it reads RPSDEGESKC…RQRSRDGSRR (87 aa).

It belongs to the cyclophilin-type PPIase family. PPIL4 subfamily.

The protein localises to the nucleus. It carries out the reaction [protein]-peptidylproline (omega=180) = [protein]-peptidylproline (omega=0). Its function is as follows. PPIases accelerate the folding of proteins. It catalyzes the cis-trans isomerization of proline imidic peptide bonds in oligopeptides. The chain is Peptidyl-prolyl cis-trans isomerase-like 4 (CYP6) from Mycosarcoma maydis (Corn smut fungus).